A 616-amino-acid polypeptide reads, in one-letter code: Spastin (616 aa).

A disordered region spans residues 1 to 44 (MNSPGGRGKKKGSGGPSSPVPPRPPPPCLASSRPAPRPAPPPQS). Residues 1–50 (MNSPGGRGKKKGSGGPSSPVPPRPPPPCLASSRPAPRPAPPPQSPHKRNL) form a required for nuclear localization region. Residues 1-56 (MNSPGGRGKKKGSGGPSSPVPPRPPPPCLASSRPAPRPAPPPQSPHKRNLYYFSYP) are Cytoplasmic-facing. Residues 1-80 (MNSPGGRGKK…LGLLFVWLCQ (80 aa)) are required for interaction with ATL1. A required for midbody localization region spans residues 1-194 (MNSPGGRGKK…LVMAKDRLQL (194 aa)). The segment at 1–300 (MNSPGGRGKK…STPKTNRTNK (300 aa)) is required for interaction with RTN1. Residues 4–11 (PGGRGKKK) carry the Nuclear localization signal motif. Pro residues-rich tracts occupy residues 18 to 28 (SPVPPRPPPPC) and 35 to 44 (APRPAPPPQS). Positions 50–87 (LYYFSYPLFLGFALLRLVAFHLGLLFVWLCQRFSRALM) are required for interaction with SSNA1 and microtubules. An intramembrane region (helical) is located at residues 57 to 77 (LFLGFALLRLVAFHLGLLFVW). A Nuclear export signal motif is present at residues 59–67 (LGFALLRLV). At 78–616 (LCQRFSRALM…WNKDFGDTTV (539 aa)) the chain is on the cytoplasmic side. A sufficient for interaction with CHMP1B region spans residues 112–196 (EVERVRAFHK…MAKDRLQLLE (85 aa)). Residues 114–200 (ERVRAFHKQA…RLQLLEKLQP (87 aa)) are required for interaction with microtubules. The 76-residue stretch at 120-195 (HKQAFEYISV…VMAKDRLQLL (76 aa)) folds into the MIT domain. The tract at residues 223–266 (GHLQSESGAVPKRKDPLTHPSNSLPRSKAIMKTGSTGLSGHHRA) is disordered. The segment at 226 to 328 (QSESGAVPKR…NVDSNLANFI (103 aa)) is sufficient for interaction with microtubules. The tract at residues 228-616 (ESGAVPKRKD…WNKDFGDTTV (389 aa)) is sufficient for microtubule severing. Phosphoserine occurs at positions 245 and 268. Residues 270–328 (SGLSIVSGMRQGPGPTTATHKSTPKTNRTNKPSTPTTAPRKKKDLKNFRNVDSNLANFI) form a required for interaction with microtubules and microtubule severing region. The disordered stretch occupies residues 278-311 (MRQGPGPTTATHKSTPKTNRTNKPSTPTTAPRKK). A compositionally biased stretch (polar residues) spans 283–306 (GPTTATHKSTPKTNRTNKPSTPTT). Residue Thr306 is modified to Phosphothreonine. Residues 309–312 (RKKK) carry the Nuclear localization signal motif. The required for interaction with microtubules stretch occupies residues 310 to 312 (KKK). 382 to 389 (GPPGNGKT) serves as a coordination point for ATP. Phosphoserine is present on Ser597.

The protein belongs to the AAA ATPase family. Spastin subfamily. In terms of assembly, homohexamer. Mostly monomeric, but assembles into hexameric structure for short periods of time. Oligomerization seems to be a prerequisite for catalytic activity. Binding to ATP in a cleft between two adjacent subunits stabilizes the homohexameric form. Binds to microtubules at least in part via the alpha-tubulin and beta-tubulin tails. The hexamer adopts a ring conformation through which microtubules pass prior to being severed. Does not interact strongly with tubulin heterodimers. Interacts (via MIT domain) with CHMP1B; the interaction is direct. Interacts with SSNA1. Interacts with ATL1. Interacts with RTN1. Interacts with ZFYVE27. Interacts with REEP1. Interacts (via MIT domain) with IST1.

It is found in the membrane. The protein localises to the endoplasmic reticulum. The protein resides in the midbody. It localises to the cytoplasm. Its subcellular location is the cytoskeleton. It is found in the microtubule organizing center. The protein localises to the centrosome. The protein resides in the perinuclear region. It localises to the nucleus. Its subcellular location is the spindle. It is found in the cell projection. The protein localises to the axon. The catalysed reaction is n ATP + n H2O + a microtubule = n ADP + n phosphate + (n+1) alpha/beta tubulin heterodimers.. With respect to regulation, allosteric enzyme with a cooperative mechanism; at least two neighbor subunits influence each other strongly in spastin hexamers. Microtubule binding promotes cooperative interactions among spastin subunits. In terms of biological role, ATP-dependent microtubule severing protein that specifically recognizes and cuts microtubules that are polyglutamylated. Preferentially recognizes and acts on microtubules decorated with short polyglutamate tails: severing activity increases as the number of glutamates per tubulin rises from one to eight, but decreases beyond this glutamylation threshold. Severing activity is not dependent on tubulin acetylation or detyrosination. Microtubule severing promotes reorganization of cellular microtubule arrays and the release of microtubules from the centrosome following nucleation. It is critical for the biogenesis and maintenance of complex microtubule arrays in axons, spindles and cilia. SPAST is involved in abscission step of cytokinesis and nuclear envelope reassembly during anaphase in cooperation with the ESCRT-III complex. Recruited at the midbody, probably by IST1, and participates in membrane fission during abscission together with the ESCRT-III complex. Recruited to the nuclear membrane by IST1 and mediates microtubule severing, promoting nuclear envelope sealing and mitotic spindle disassembly during late anaphase. Required for membrane traffic from the endoplasmic reticulum (ER) to the Golgi and endosome recycling. Recruited by IST1 to endosomes and regulates early endosomal tubulation and recycling by mediating microtubule severing. Probably plays a role in axon growth and the formation of axonal branches. This chain is Spastin, found in Sus scrofa (Pig).